Here is a 100-residue protein sequence, read N- to C-terminus: Large ribosomal subunit protein uL23 (100 aa).

The protein belongs to the universal ribosomal protein uL23 family. Part of the 50S ribosomal subunit. Contacts protein L29, and trigger factor when it is bound to the ribosome.

One of the early assembly proteins it binds 23S rRNA. One of the proteins that surrounds the polypeptide exit tunnel on the outside of the ribosome. Forms the main docking site for trigger factor binding to the ribosome. This Pseudoalteromonas translucida (strain TAC 125) protein is Large ribosomal subunit protein uL23.